The primary structure comprises 1216 residues: Metabotropic glycine receptor (1216 aa).

A signal peptide spans 1–23 (MGVMAYPFLFCLLLVHFGLGAIG). Residues 24 to 417 (ASREAPSRPD…CFVQEDKYLR (394 aa)) lie on the Extracellular side of the membrane. The segment at 25 to 65 (SREAPSRPDPPRERTLRAKQHAQQPARASASDPSAPWSRST) is disordered. The segment covering 28-40 (APSRPDPPRERTL) has biased composition (basic and acidic residues). A compositionally biased stretch (low complexity) spans 46-64 (AQQPARASASDPSAPWSRS). The cache-like region stretch occupies residues 85–281 (YLYTGDSHKL…CENGSYKPGW (197 aa)). Asn98 and Asn143 each carry an N-linked (GlcNAc...) asparagine glycan. An intrachain disulfide couples Cys99 to Cys272. 2 residues coordinate glycine: Ser172 and Arg173. A glycan (N-linked (GlcNAc...) asparagine) is linked at Asn215. A glycine-binding site is contributed by Glu271. N-linked (GlcNAc...) asparagine glycosylation occurs at Asn274. Asp307 contacts glycine. Asn333 is a glycosylation site (N-linked (GlcNAc...) asparagine). A helical transmembrane segment spans residues 418–439 (LAIISFQALCMLLDFLSMLVVY). Topologically, residues 440–451 (RFRKAKSIRASG) are cytoplasmic. Residues 452 to 474 (LILLETILFGSLLLYFPVVILYF) form a helical membrane-spanning segment. The Extracellular portion of the chain corresponds to 475 to 478 (EPST). The chain crosses the membrane as a helical span at residues 479-501 (FRCILLRWVRLLGFATVYGTVTL). Cys481 and Cys573 are joined by a disulfide. Topologically, residues 502 to 525 (KLHRVLKVFLSRTAQRIPYMTGGR) are cytoplasmic. The chain crosses the membrane as a helical span at residues 526–547 (VMRMLAVILLVVFWFLVGWTSS). The Extracellular portion of the chain corresponds to 548 to 576 (VCQNLERHISLIGQGRTSDHLIFSMCLVE). The chain crosses the membrane as a helical span at residues 577–597 (RWDYMTAAAEFLFLLWGVYLC). The Cytoplasmic segment spans residues 598–611 (YAVRTVPSAFHEPR). A helical transmembrane segment spans residues 612-633 (YMAVAVHNELIISAIFHTIRFV). Over 634–642 (LASRLQSDW) the chain is Extracellular. The chain crosses the membrane as a helical span at residues 643–664 (MLMLYFAHTHLTVTVTIGLLLI). Topologically, residues 665–1216 (PKFSHSSNNP…NEEVRLARKV (552 aa)) are cytoplasmic. Phosphoserine occurs at positions 694, 705, and 708. 2 disordered regions span residues 757–875 (RITE…ESVP) and 911–1000 (KEKT…HMKD). Residues 769–781 (CSKEDKDGGEHGS) are compositionally biased toward basic and acidic residues. Residue Lys774 forms a Glycyl lysine isopeptide (Lys-Gly) (interchain with G-Cter in ubiquitin) linkage. The segment covering 864–873 (EDSQAVSTES) has biased composition (polar residues). A Phosphoserine modification is found at Ser866. The span at 926–944 (VEERAKAQKALPRERETNR) shows a compositional bias: basic and acidic residues. Polar residues-rich tracts occupy residues 945–963 (KYSN…PNSS) and 980–991 (QRANPTTANSDL). At Ser947 the chain carries Phosphoserine. The VCPWE motif 1 signature appears at 1007–1011 (VCPWE). The segment at 1038–1072 (ERNPTFSLKEKSHPKPKAADLCQQSNPKSVDKAEV) is disordered. Ser1066 carries the post-translational modification Phosphoserine. A VCPWE motif 2 motif is present at residues 1072–1076 (VCPWE). Ser1081 carries the phosphoserine modification. A disordered region spans residues 1128–1167 (SKVENENLNQLGEQEKKTSSSERNVPDSHNSSNNFQPPLM). The span at 1140 to 1153 (EQEKKTSSSERNVP) shows a compositional bias: basic and acidic residues. Residues 1154 to 1163 (DSHNSSNNFQ) show a composition bias toward polar residues. The short motif at 1172–1176 (VCPWE) is the VCPWE motif 3 element.

It belongs to the G-protein coupled receptor 3 family. Homodimer. Associates with the RGS7-GNB5 complex, promoting its localization to the cell membrane and regulating its GTPase activator activity. Interacts (via VCPWE motifs) with GNAO1. Interacts with GPC4. Interacts with EGFLAM.

The protein resides in the cell membrane. It localises to the postsynaptic cell membrane. Its subcellular location is the presynaptic cell membrane. The protein localises to the nucleus. Its function is as follows. Metabotropic receptor for glycine that controls synapse formation and function in the brain. Acts as an atypical G-protein coupled receptor that recruits and regulates the RGS7-GNB5 complex instead of activating G proteins. In absence of glycine ligand, promotes the GTPase activator activity of RGS7, increasing the GTPase activity of G protein alpha subunits, thereby driving them into their inactive GDP-bound form. Glycine-binding changes the conformation of the intracellular surface, inhibiting the GTPase activator activity of the RGS7-GNB5 complex, promoting G protein alpha subunits into their active GTP-bound form and regulating cAMP levels. Also able to bind taurine, a compound closely related to glycine, but with a two-fold lower affinity. Glycine receptor-dependent regulation of cAMP controls key ion channels, kinases and neurotrophic factors involved in neuronal excitability and synaptic transmission. Plays a pivotal role in regulating mood and cognition via its ability to regulate neuronal excitability in L2/L3 pyramidal neurons of the prefrontal cortex. Also involved in spatial learning by regulating hippocampal CA1 neuronal excitability. Acts as a synaptic organizer in the hippocampus, required for proper mossy fiber-CA3 neurocircuitry establishment, structure and function: induces presynaptic differentiation in contacting axons via its interaction with GPC4. In addition to glycine, may also act as a receptor for osteocalcin (BGLAP) hormone: osteocalcin-binding initiates a signaling response that prevents neuronal apoptosis in the hippocampus and regulates the synthesis of neurotransmitters. The chain is Metabotropic glycine receptor (GPR158) from Bos taurus (Bovine).